The sequence spans 142 residues: Large ribosomal subunit protein uL11 (142 aa).

The protein belongs to the universal ribosomal protein uL11 family. In terms of assembly, part of the ribosomal stalk of the 50S ribosomal subunit. Interacts with L10 and the large rRNA to form the base of the stalk. L10 forms an elongated spine to which L12 dimers bind in a sequential fashion forming a multimeric L10(L12)X complex. One or more lysine residues are methylated.

Forms part of the ribosomal stalk which helps the ribosome interact with GTP-bound translation factors. This Solibacter usitatus (strain Ellin6076) protein is Large ribosomal subunit protein uL11.